The chain runs to 105 residues: U1-sicaritoxin-Li1b (105 aa).

The signal sequence occupies residues 1-19; the sequence is MKLLFEGLLVLVLIAFVVA. Residues 20 to 36 constitute a propeptide that is removed on maturation; sequence EFESDAEKWEALITQER. Cystine bridges form between C38-C55, C46-C60, C54-C73, and C62-C71. R82 carries the arginine amide modification. Residues 86 to 105 constitute a propeptide that is removed on maturation; the sequence is ALMVDPETHRMLSLHRLSEE.

It belongs to the neurotoxin 28 (Litx) family. Expressed by the venom gland.

Its subcellular location is the secreted. Toxin active against insects (S.frugiperda larvae). May act on sodium (Nav) or calcium (Cav) channels. This is U1-sicaritoxin-Li1b from Loxosceles intermedia (Brown spider).